Here is a 75-residue protein sequence, read N- to C-terminus: Exodeoxyribonuclease 7 small subunit (75 aa).

This sequence belongs to the XseB family. As to quaternary structure, heterooligomer composed of large and small subunits.

Its subcellular location is the cytoplasm. The enzyme catalyses Exonucleolytic cleavage in either 5'- to 3'- or 3'- to 5'-direction to yield nucleoside 5'-phosphates.. Bidirectionally degrades single-stranded DNA into large acid-insoluble oligonucleotides, which are then degraded further into small acid-soluble oligonucleotides. This Pelobacter propionicus (strain DSM 2379 / NBRC 103807 / OttBd1) protein is Exodeoxyribonuclease 7 small subunit.